Here is a 393-residue protein sequence, read N- to C-terminus: tRNA(Met) cytidine acetate ligase (393 aa).

ATP-binding residues include Gly-81, Asn-142, and Arg-167.

It belongs to the TmcAL family.

The protein resides in the cytoplasm. The catalysed reaction is cytidine(34) in elongator tRNA(Met) + acetate + ATP = N(4)-acetylcytidine(34) in elongator tRNA(Met) + AMP + diphosphate. Functionally, catalyzes the formation of N(4)-acetylcytidine (ac(4)C) at the wobble position of elongator tRNA(Met), using acetate and ATP as substrates. First activates an acetate ion to form acetyladenylate (Ac-AMP) and then transfers the acetyl group to tRNA to form ac(4)C34. This chain is tRNA(Met) cytidine acetate ligase, found in Bacillus cereus (strain Q1).